Reading from the N-terminus, the 279-residue chain is Nitrogenase vanadium-iron protein alpha chain (279 aa).

3 residues coordinate [8Fe-7S] cluster: Cys-5, Cys-31, and Cys-94. Cys-213 contacts [7Fe-V-9S-C-homocitryl] cluster.

The protein belongs to the NifD/NifK/NifE/NifN family. As to quaternary structure, hexamer of two alpha, two beta, and two delta chains. [8Fe-7S] cluster is required as a cofactor. The cofactor is [7Fe-V-9S-C-homocitryl] cluster.

It catalyses the reaction N2 + 8 reduced [2Fe-2S]-[ferredoxin] + 16 ATP + 16 H2O = H2 + 8 oxidized [2Fe-2S]-[ferredoxin] + 2 NH4(+) + 16 ADP + 16 phosphate + 6 H(+). Its function is as follows. This vanadium-iron protein is part of the nitrogenase complex that catalyzes the key enzymatic reactions in nitrogen fixation. The chain is Nitrogenase vanadium-iron protein alpha chain (vnfD) from Azotobacter salinestris.